Consider the following 204-residue polypeptide: Putative F-box protein L168 (204 aa).

One can recognise an F-box domain in the interval 1 to 46 (MNLCDLFDEIIIGIIDELSDRDKIKFMTTCSRFYYFIDKTKYFDIY). The segment at 161-184 (NETNKITNNHTNKKINNNKKHQNN) is disordered. Positions 171 to 183 (TNKKINNNKKHQN) are enriched in basic residues.

This chain is Putative F-box protein L168, found in Acanthamoeba polyphaga (Amoeba).